The following is a 726-amino-acid chain: Methionine--tRNA ligase (726 aa).

The short motif at P12 to N22 is the 'HIGH' region element. 4 residues coordinate Zn(2+): C143, C146, C155, and C158. Residues K330–S334 carry the 'KMSKS' region motif. K333 is a binding site for ATP. A tRNA-binding domain is found at F562–I667.

This sequence belongs to the class-I aminoacyl-tRNA synthetase family. MetG type 1 subfamily. As to quaternary structure, homodimer. The cofactor is Zn(2+).

The protein resides in the cytoplasm. It carries out the reaction tRNA(Met) + L-methionine + ATP = L-methionyl-tRNA(Met) + AMP + diphosphate. Functionally, is required not only for elongation of protein synthesis but also for the initiation of all mRNA translation through initiator tRNA(fMet) aminoacylation. This Borrelia turicatae (strain 91E135) protein is Methionine--tRNA ligase.